Here is a 1272-residue protein sequence, read N- to C-terminus: Fused isobutyryl-CoA mutase (1272 aa).

Residues 20 to 158 enclose the B12-binding domain; that stretch reads RLRFVTAAAL…ARCAEGARAA (139 aa). Residue H33 coordinates adenosylcob(III)alamin. A GTPase chaperone MeaI region spans residues 163 to 536; that stretch reads ESQVGAWAAE…YRHVAEALRK (374 aa). The segment at 193 to 240 is disordered; that stretch reads GAVARNPSSEASRVAAAGRGDHLDRGVRAASTADTADTANTANTANTA. The span at 221-240 shows a compositional bias: low complexity; sequence AASTADTADTANTANTANTA. 334–339 contacts GTP; the sequence is GAGKSS. Residues S338, I363, D364, and D377 each contribute to the Mg(2+) site. R380 lines the GTP pocket. Positions 429 and 430 each coordinate Mg(2+). Position 476–479 (476–479) interacts with GTP; the sequence is NKFD. Residues 537–758 form a linker region; that stretch reads HGLRSGGGRL…MLDNLPGYFP (222 aa). Composition is skewed to low complexity over residues 614–631 and 639–663; these read TVATSASPGASASSKANA and ANASPGANTTANSNASATSGTATPT. Residues 614–667 are disordered; sequence TVATSASPGASASSKANACTSTSSKANASPGANTTANSNASATSGTATPTDALN. Substrate is bound by residues F766, R801, R907, Y951, S1000, R1035, and K1040. GTP is bound by residues E1152 and N1271.

It belongs to the IcmF family. In terms of assembly, homodimer. It depends on adenosylcob(III)alamin as a cofactor. Mg(2+) serves as cofactor.

The enzyme catalyses 2-methylpropanoyl-CoA = butanoyl-CoA. It carries out the reaction GTP + H2O = GDP + phosphate + H(+). Catalyzes the reversible interconversion of isobutyryl-CoA and n-butyryl-CoA, using radical chemistry. Also exhibits GTPase activity, associated with its G-protein domain (MeaI) that functions as a chaperone that assists cofactor delivery and proper holo-enzyme assembly. Does not exhibit methylmalonyl-CoA mutase (MCM) activity. The protein is Fused isobutyryl-CoA mutase of Paraburkholderia xenovorans (strain LB400).